A 982-amino-acid chain; its full sequence is Zinc finger and BTB domain-containing protein 4 (982 aa).

Positions 30–131 constitute a BTB domain; it reads CDVTLIAGDT…IYSARLALPG (102 aa). Lysine 40 participates in a covalent cross-link: Glycyl lysine isopeptide (Lys-Gly) (interchain with G-Cter in SUMO2). The disordered stretch occupies residues 71 to 103; the sequence is TGGSAPSPATTTAASSSSSSPPPASPHSSSPPR. Over residues 74 to 89 the composition is skewed to low complexity; it reads SAPSPATTTAASSSSS. The interaction with CBFA2T3 stretch occupies residues 165–324; the sequence is VPPAPTSMVT…CRYCEKVFAL (160 aa). The C2H2-type 1; atypical zinc finger occupies 210–232; the sequence is FPCPRCGKSFIHPKRLQTHEAQC. A disordered region spans residues 234 to 255; the sequence is RGSNTRGSAGLGPGVSGSGGPA. Gly residues predominate over residues 242–255; that stretch reads AGLGPGVSGSGGPA. C2H2-type zinc fingers lie at residues 285 to 307, 313 to 335, and 341 to 364; these read YVCAACERSYVTLSSLKRHSNVH, YPCRYCEKVFALAEYRTKHEVWH, and YQCIFCWDTFVTYYNLKTHQRAFH. Serine 367 carries the post-translational modification Phosphoserine. The tract at residues 404–578 is disordered; sequence KTYSQGAPEA…QLQAPPPLCQ (175 aa). The segment covering 430 to 446 has biased composition (pro residues); that stretch reads SPQPLPPPAPEPGPPPS. Residues 467 to 477 show a composition bias toward gly residues; sequence AAGGGPAGTGG. 2 stretches are compositionally biased toward low complexity: residues 478–488 and 507–529; these read SQAASVITYTT and ATPTSPASTAVSPATAAGPATAT. Residue lysine 548 forms a Glycyl lysine isopeptide (Lys-Gly) (interchain with G-Cter in SUMO2) linkage. A compositionally biased stretch (gly residues) spans 552–565; that stretch reads GLSGSGGSPTGTGR. Lysine 590 is covalently cross-linked (Glycyl lysine isopeptide (Lys-Gly) (interchain with G-Cter in SUMO2)). A compositionally biased stretch (basic and acidic residues) spans 591 to 600; it reads RRISETDLRP. 4 disordered regions span residues 591-700, 715-738, 759-839, and 854-880; these read RRIS…ERRH, LRKHQEAHSGGSHTSRTGRRSSTR, QRHA…GGGS, and GGSREPSAGKGKPGNEGSLGASEGDRM. Residues 604–627 show a composition bias toward acidic residues; the sequence is SGEEVEESEEEEEEEEEEDQEEQE. The span at 628-637 shows a compositional bias: basic and acidic residues; that stretch reads ESKAGGEDQL. 2 C2H2-type zinc fingers span residues 700–722 and 739–761; these read HRCGDCAQAFATVRKLRKHQEAH and FTCPHCAKVCKTAAALNRHGQRH. Phosphothreonine; by HIPK2 occurs at positions 769 and 771. Over residues 799 to 820 the composition is skewed to low complexity; that stretch reads SSSSGEAGSGSAAAAEASESAS. Threonine 953 bears the Phosphothreonine; by HIPK2 mark.

In terms of assembly, interacts with HIPK2. Interacts with CBFA2T3. Interacts with ZBTB38. Post-translationally, phosphorylated by HIPK2. This phosphorylation reduces stability and triggers ZBTB4 protein degradation in response to DNA damage. As to expression, expressed in adult and aged myogenic satellite cells.

The protein localises to the nucleus. It is found in the chromosome. In terms of biological role, transcriptional repressor with bimodal DNA-binding specificity. Represses transcription in a methyl-CpG-dependent manner. Binds with a higher affinity to methylated CpG dinucleotides in the consensus sequence 5'-CGCG-3' but can also bind to the non-methylated consensus sequence 5'-CTGCNA-3' also known as the consensus kaiso binding site (KBS). Can also bind specifically to a single methyl-CpG pair and can bind hemimethylated DNA but with a lower affinity compared to methylated DNA. Plays a role in postnatal myogenesis, may be involved in the regulation of satellite cells self-renewal. This Mus musculus (Mouse) protein is Zinc finger and BTB domain-containing protein 4 (Zbtb4).